The following is a 247-amino-acid chain: E3 SUMO-protein ligase NSE2 (247 aa).

Methionine 1 is modified (N-acetylmethionine). Glycyl lysine isopeptide (Lys-Gly) (interchain with G-Cter in SUMO2) cross-links involve residues lysine 90 and lysine 107. Serine 116 is subject to Phosphoserine. Residues lysine 125 and lysine 130 each participate in a glycyl lysine isopeptide (Lys-Gly) (interchain with G-Cter in SUMO2) cross-link. The SP-RING-type zinc-finger motif lies at 154 to 240 (MDEDMIVTQS…LRRAIESHNK (87 aa)). 4 residues coordinate Zn(2+): cysteine 185, histidine 187, cysteine 210, and cysteine 215.

Belongs to the NSE2 family. As to quaternary structure, component of the SMC5-SMC6 complex which consists at least of SMC5, SMC6, NSMCE2, NSMCE1, NSMCE4A or EID3 and NSMCE3. Post-translationally, sumoylated, possibly via autosumoylation.

It localises to the nucleus. The protein resides in the chromosome. The protein localises to the telomere. It is found in the PML body. Its pathway is protein modification; protein sumoylation. Its function is as follows. E3 SUMO-protein ligase component of the SMC5-SMC6 complex, a complex involved in DNA double-strand break repair by homologous recombination. Is not be required for the stability of the complex. The complex may promote sister chromatid homologous recombination by recruiting the SMC1-SMC3 cohesin complex to double-strand breaks. Acts as an E3 ligase mediating SUMO attachment to various proteins such as SMC6L1 and TSNAX, the shelterin complex subunits TERF1, TERF2, TINF2 and TERF2IP, RAD51AP1, and maybe the cohesin components RAD21 and STAG2. Required for recruitment of telomeres to PML nuclear bodies. Required for sister chromatid cohesion during prometaphase and mitotic progression. The protein is E3 SUMO-protein ligase NSE2 (Nsmce2) of Rattus norvegicus (Rat).